Reading from the N-terminus, the 82-residue chain is UPF0298 protein SMU_1670c (82 aa).

This sequence belongs to the UPF0298 family.

The protein resides in the cytoplasm. This is UPF0298 protein SMU_1670c from Streptococcus mutans serotype c (strain ATCC 700610 / UA159).